Consider the following 103-residue polypeptide: Large ribosomal subunit protein bL21 (103 aa).

Belongs to the bacterial ribosomal protein bL21 family. As to quaternary structure, part of the 50S ribosomal subunit. Contacts protein L20.

Functionally, this protein binds to 23S rRNA in the presence of protein L20. This is Large ribosomal subunit protein bL21 from Clostridium acetobutylicum (strain ATCC 824 / DSM 792 / JCM 1419 / IAM 19013 / LMG 5710 / NBRC 13948 / NRRL B-527 / VKM B-1787 / 2291 / W).